The sequence spans 432 residues: Anaerobic glycerol-3-phosphate dehydrogenase subunit B (432 aa).

This sequence belongs to the anaerobic G-3-P dehydrogenase subunit B family. In terms of assembly, composed of a catalytic GlpA/B dimer and of membrane bound GlpC. FMN serves as cofactor.

The enzyme catalyses a quinone + sn-glycerol 3-phosphate = dihydroxyacetone phosphate + a quinol. The protein operates within polyol metabolism; glycerol degradation via glycerol kinase pathway; glycerone phosphate from sn-glycerol 3-phosphate (anaerobic route): step 1/1. Its function is as follows. Conversion of glycerol 3-phosphate to dihydroxyacetone. Uses fumarate or nitrate as electron acceptor. The chain is Anaerobic glycerol-3-phosphate dehydrogenase subunit B from Haemophilus influenzae (strain 86-028NP).